A 561-amino-acid chain; its full sequence is Lanosterol 14-alpha demethylase (561 aa).

C501 provides a ligand contact to heme.

It belongs to the cytochrome P450 family. Requires heme as cofactor.

The protein localises to the membrane. The enzyme catalyses a 14alpha-methyl steroid + 3 reduced [NADPH--hemoprotein reductase] + 3 O2 = a Delta(14) steroid + formate + 3 oxidized [NADPH--hemoprotein reductase] + 4 H2O + 4 H(+). It catalyses the reaction a 14alpha-methyl steroid + reduced [NADPH--hemoprotein reductase] + O2 = a 14alpha-hydroxymethyl steroid + oxidized [NADPH--hemoprotein reductase] + H2O + H(+). The catalysed reaction is a 14alpha-hydroxymethyl steroid + reduced [NADPH--hemoprotein reductase] + O2 = a 14alpha-formyl steroid + oxidized [NADPH--hemoprotein reductase] + 2 H2O + H(+). It carries out the reaction a 14alpha-formyl steroid + reduced [NADPH--hemoprotein reductase] + O2 = a Delta(14) steroid + formate + oxidized [NADPH--hemoprotein reductase] + H2O + 2 H(+). The enzyme catalyses lanosterol + 3 reduced [NADPH--hemoprotein reductase] + 3 O2 = 4,4-dimethyl-5alpha-cholesta-8,14,24-trien-3beta-ol + formate + 3 oxidized [NADPH--hemoprotein reductase] + 4 H2O + 4 H(+). It catalyses the reaction lanosterol + reduced [NADPH--hemoprotein reductase] + O2 = 32-hydroxylanosterol + oxidized [NADPH--hemoprotein reductase] + H2O + H(+). The catalysed reaction is 32-hydroxylanosterol + reduced [NADPH--hemoprotein reductase] + O2 = 32-oxolanosterol + oxidized [NADPH--hemoprotein reductase] + 2 H2O + H(+). It carries out the reaction 32-oxolanosterol + reduced [NADPH--hemoprotein reductase] + O2 = 4,4-dimethyl-5alpha-cholesta-8,14,24-trien-3beta-ol + formate + oxidized [NADPH--hemoprotein reductase] + H2O + 2 H(+). The enzyme catalyses eburicol + 3 reduced [NADPH--hemoprotein reductase] + 3 O2 = 14-demethyleburicol + formate + 3 oxidized [NADPH--hemoprotein reductase] + 4 H2O + 4 H(+). It catalyses the reaction eburicol + reduced [NADPH--hemoprotein reductase] + O2 = 32-hydroxyeburicol + oxidized [NADPH--hemoprotein reductase] + H2O + H(+). The catalysed reaction is 32-hydroxyeburicol + reduced [NADPH--hemoprotein reductase] + O2 = 32-oxoeburicol + oxidized [NADPH--hemoprotein reductase] + 2 H2O + H(+). It carries out the reaction 32-oxoeburicol + reduced [NADPH--hemoprotein reductase] + O2 = 14-demethyleburicol + formate + oxidized [NADPH--hemoprotein reductase] + H2O + 2 H(+). It participates in steroid biosynthesis; zymosterol biosynthesis; zymosterol from lanosterol: step 1/6. Its function is as follows. Sterol 14alpha-demethylase that plays a critical role in the third module of ergosterol biosynthesis pathway, being ergosterol the major sterol component in fungal membranes that participates in a variety of functions. The third module or late pathway involves the ergosterol synthesis itself through consecutive reactions that mainly occur in the endoplasmic reticulum (ER) membrane. In filamentous fungi, during the initial step of this module, lanosterol (lanosta-8,24-dien-3beta-ol) can be metabolized to eburicol. Sterol 14alpha-demethylase catalyzes the three-step oxidative removal of the 14alpha-methyl group (C-32) of both these sterols in the form of formate, and converts eburicol and lanosterol to 14-demethyleburicol (4,4,24-trimethylergosta-8,14,24(28)-trienol) and 4,4-dimethyl-5alpha-cholesta-8,14,24-trien-3beta-ol, respectively, which are further metabolized by other enzymes in the pathway to ergosterol. Can also use substrates not intrinsic to fungi, such as 24,25-dihydrolanosterol (DHL), producing 4,4-dimethyl-8,14-cholestadien-3-beta-ol, but at lower rates than the endogenous substrates. The protein is Lanosterol 14-alpha demethylase (ERG11) of Mycosarcoma maydis (Corn smut fungus).